The chain runs to 235 residues: Chromosome partition protein MukE (235 aa).

The segment at 204 to 235 (QQEPSQSSLLDGFDADDTGHHDSELTMQEGEV) is disordered.

The protein belongs to the MukE family. As to quaternary structure, interacts, and probably forms a ternary complex, with MukF and MukB. The complex formation is stimulated by calcium or magnesium.

It localises to the cytoplasm. The protein localises to the nucleoid. In terms of biological role, involved in chromosome condensation, segregation and cell cycle progression. May participate in facilitating chromosome segregation by condensation DNA from both sides of a centrally located replisome during cell division. Probably acts via its interaction with MukB and MukF. The chain is Chromosome partition protein MukE from Photobacterium profundum (strain SS9).